The primary structure comprises 231 residues: RNA pyrophosphohydrolase (231 aa).

In terms of domain architecture, Nudix hydrolase spans G6–T149. The Nudix box motif lies at G38–G59. Residues R157–A190 form a disordered region.

The protein belongs to the Nudix hydrolase family. RppH subfamily. A divalent metal cation is required as a cofactor.

Functionally, accelerates the degradation of transcripts by removing pyrophosphate from the 5'-end of triphosphorylated RNA, leading to a more labile monophosphorylated state that can stimulate subsequent ribonuclease cleavage. The chain is RNA pyrophosphohydrolase from Paraburkholderia phymatum (strain DSM 17167 / CIP 108236 / LMG 21445 / STM815) (Burkholderia phymatum).